The following is a 447-amino-acid chain: Tubulin beta-4 chain (447 aa).

The GTP site is built by glutamine 11, glutamate 69, serine 138, glycine 142, threonine 143, glycine 144, asparagine 204, and asparagine 226. Glutamate 69 lines the Mg(2+) pocket. The disordered stretch occupies residues 423 to 447 (QQYQDATADEEGEYEDEEQQEADDM). The segment covering 429-447 (TADEEGEYEDEEQQEADDM) has biased composition (acidic residues).

The protein belongs to the tubulin family. As to quaternary structure, dimer of alpha and beta chains. A typical microtubule is a hollow water-filled tube with an outer diameter of 25 nm and an inner diameter of 15 nM. Alpha-beta heterodimers associate head-to-tail to form protofilaments running lengthwise along the microtubule wall with the beta-tubulin subunit facing the microtubule plus end conferring a structural polarity. Microtubules usually have 13 protofilaments but different protofilament numbers can be found in some organisms and specialized cells. It depends on Mg(2+) as a cofactor. As to expression, expressed in roots and leaf sheaths.

Its subcellular location is the cytoplasm. The protein localises to the cytoskeleton. Its function is as follows. Tubulin is the major constituent of microtubules, a cylinder consisting of laterally associated linear protofilaments composed of alpha- and beta-tubulin heterodimers. Microtubules grow by the addition of GTP-tubulin dimers to the microtubule end, where a stabilizing cap forms. Below the cap, tubulin dimers are in GDP-bound state, owing to GTPase activity of alpha-tubulin. This is Tubulin beta-4 chain (TUBB4) from Oryza sativa subsp. japonica (Rice).